Consider the following 528-residue polypeptide: Tyrosine 3-monooxygenase (528 aa).

Ser-19 carries the post-translational modification Phosphoserine; by CaMK2. Residues 33–65 (GQGAPGPSLTGSPWPGTAAPAASYTPTPRSPRF) are disordered. Residues 47–59 (PGTAAPAASYTPT) are compositionally biased toward low complexity. At Ser-62 the chain carries Phosphoserine. Ser-71 bears the Phosphoserine; by CaMK2 and PKA mark. His-361, His-366, and Glu-406 together coordinate Fe cation. The residue at position 502 (Ser-502) is a Phosphoserine.

Belongs to the biopterin-dependent aromatic amino acid hydroxylase family. As to quaternary structure, homotetramer. Interacts (when phosphorylated at Ser-19) with YWHAG; one YWHAG dimer binds to one TH tetramer and this interaction may influence the phosphorylation and dephosphorylation of other sites. Interacts with NT5DC2; the interaction results in reduced phosphorylation and decreased catalytic activity of TH. Fe(2+) is required as a cofactor. In terms of processing, phosphorylated on Ser-19, Ser-62 and Ser-71 by several protein kinases with different site specificities. Phosphorylation at Ser-62 and Ser-71 leads to an increase of TH activity. Phosphorylation at Ser-71 activates the enzyme and also counteracts the feedback inhibition of TH by catecholamines. Phosphorylation of Ser-19 and Ser-62 triggers the proteasomal degradation of TH through the ubiquitin-proteasome pathway. Phosphorylation at Ser-62 facilitates transport of TH from the soma to the nerve terminals via the microtubule network. Phosphorylation at Ser-19 induces the high-affinity binding to the 14-3-3 protein YWHAG; this interaction may influence the phosphorylation and dephosphorylation of other sites. Ser-19 increases the phosphorylation at Ser-71 in a hierarchical manner, leading to increased activity. In terms of tissue distribution, mainly expressed in the brain and adrenal glands.

The protein resides in the cytoplasm. It is found in the perinuclear region. It localises to the nucleus. The protein localises to the cell projection. Its subcellular location is the axon. The protein resides in the cytoplasmic vesicle. It is found in the secretory vesicle. It localises to the synaptic vesicle. It carries out the reaction (6R)-L-erythro-5,6,7,8-tetrahydrobiopterin + L-tyrosine + O2 = (4aS,6R)-4a-hydroxy-L-erythro-5,6,7,8-tetrahydrobiopterin + L-dopa. It functions in the pathway catecholamine biosynthesis; dopamine biosynthesis; dopamine from L-tyrosine: step 1/2. With respect to regulation, inhibited in feedback fashion by the catecholamine neurotransmitters, especially by dopamine in competition with tetrahydrobiopterin. Phosphorylation of several Ser/Thr residues in the N-terminus regulates the catalytic activity. Ser-62 and Ser-71 are readily phosphorylated to activate the catalytic activity. A Cysteine modification induced by N-ethylmaleimide (NEM), inhibits tyrosine 3-monooxygenase activity through the modification of the Cys-207. Functionally, catalyzes the conversion of L-tyrosine to L-dihydroxyphenylalanine (L-Dopa), the rate-limiting step in the biosynthesis of catecholamines, dopamine, noradrenaline, and adrenaline. Uses tetrahydrobiopterin and molecular oxygen to convert tyrosine to L-Dopa. In addition to tyrosine, is able to catalyze the hydroxylation of phenylalanine and tryptophan with lower specificity. Positively regulates the regression of retinal hyaloid vessels during postnatal development. Its function is as follows. Lacks catalytic activity. This Homo sapiens (Human) protein is Tyrosine 3-monooxygenase.